Consider the following 430-residue polypeptide: tRNA(Ile)-lysidine synthase (430 aa).

27-32 (SGGSDS) is a binding site for ATP.

Belongs to the tRNA(Ile)-lysidine synthase family.

It is found in the cytoplasm. It catalyses the reaction cytidine(34) in tRNA(Ile2) + L-lysine + ATP = lysidine(34) in tRNA(Ile2) + AMP + diphosphate + H(+). In terms of biological role, ligates lysine onto the cytidine present at position 34 of the AUA codon-specific tRNA(Ile) that contains the anticodon CAU, in an ATP-dependent manner. Cytidine is converted to lysidine, thus changing the amino acid specificity of the tRNA from methionine to isoleucine. In Rickettsia prowazekii (strain Madrid E), this protein is tRNA(Ile)-lysidine synthase.